Consider the following 565-residue polypeptide: Arginine--tRNA ligase (565 aa).

The short motif at Pro-120–His-130 is the 'HIGH' region element.

Belongs to the class-I aminoacyl-tRNA synthetase family. Monomer.

It localises to the cytoplasm. It catalyses the reaction tRNA(Arg) + L-arginine + ATP = L-arginyl-tRNA(Arg) + AMP + diphosphate. In Clostridium perfringens (strain 13 / Type A), this protein is Arginine--tRNA ligase.